The chain runs to 366 residues: Phospho-N-acetylmuramoyl-pentapeptide-transferase (366 aa).

Transmembrane regions (helical) follow at residues 27–47 (AALF…INSL), 71–91 (TPTM…LLWA), 93–113 (LSNV…AIGF), 134–154 (LGIE…TALA), 174–194 (FLIN…VGAG), 205–225 (GLAI…AYLA), 245–265 (LAVV…FNAP), 268–288 (AIFM…TVAV), 294–314 (IVMA…IIQV), and 343–363 (QVVI…LSTL).

It belongs to the glycosyltransferase 4 family. MraY subfamily. Mg(2+) is required as a cofactor.

The protein localises to the cell inner membrane. It carries out the reaction UDP-N-acetyl-alpha-D-muramoyl-L-alanyl-gamma-D-glutamyl-meso-2,6-diaminopimeloyl-D-alanyl-D-alanine + di-trans,octa-cis-undecaprenyl phosphate = di-trans,octa-cis-undecaprenyl diphospho-N-acetyl-alpha-D-muramoyl-L-alanyl-D-glutamyl-meso-2,6-diaminopimeloyl-D-alanyl-D-alanine + UMP. It functions in the pathway cell wall biogenesis; peptidoglycan biosynthesis. In terms of biological role, catalyzes the initial step of the lipid cycle reactions in the biosynthesis of the cell wall peptidoglycan: transfers peptidoglycan precursor phospho-MurNAc-pentapeptide from UDP-MurNAc-pentapeptide onto the lipid carrier undecaprenyl phosphate, yielding undecaprenyl-pyrophosphoryl-MurNAc-pentapeptide, known as lipid I. The chain is Phospho-N-acetylmuramoyl-pentapeptide-transferase from Rhizobium etli (strain CIAT 652).